The following is a 66-amino-acid chain: Probable Sec-independent protein translocase protein TatE (66 aa).

Residues 1–21 (MEGISITKLLVIAVLIVLLFG) traverse the membrane as a helical segment. The interval 46-66 (ETPAAKKSDGAEAAPRVENKE) is disordered.

This sequence belongs to the TatA/E family. TatE subfamily.

The protein resides in the cell inner membrane. Functionally, part of the twin-arginine translocation (Tat) system that transports large folded proteins containing a characteristic twin-arginine motif in their signal peptide across membranes. TatE shares overlapping functions with TatA. The polypeptide is Probable Sec-independent protein translocase protein TatE (Edwardsiella piscicida).